We begin with the raw amino-acid sequence, 301 residues long: Radial spoke head 1 homolog (301 aa).

Acidic residues predominate over residues M1–Y20. The interval M1–G41 is disordered. MORN repeat units follow at residues Y20–T43, Y44–R66, Y67–R89, Y90–T112, Y113–S135, and Y159–E181. The span at E21–H31 shows a compositional bias: basic and acidic residues. Positions L225–D301 are disordered. A compositionally biased stretch (acidic residues) spans P249–E261. The segment covering L262–S278 has biased composition (basic and acidic residues). Residues Q279–L290 are compositionally biased toward polar residues. A compositionally biased stretch (acidic residues) spans F292–D301.

In terms of assembly, component of the axonemal radial spoke 1 (RS1) and 2 (RS2) complexes, at least composed of spoke head proteins RSPH1, RSPH3, RSPH9 and the cilia-specific component RSPH4A or sperm-specific component RSPH6A, spoke stalk proteins RSPH14, DNAJB13, DYDC1, ROPN1L and NME5, and the RS1 complex-specific anchor protein IQUB. Interacts with RSPH3B. Interacts with RSPH4A. Interacts with RSPH6A. In terms of tissue distribution, expressed in the trachea, ependymal cells, oviduct and ependymal cells (at protein level). Germ cell specific. Specifically expressed in testis, and to a lower extent in ovary. Not expressed in somatic tissues.

It is found in the cytoplasm. The protein localises to the chromosome. Its subcellular location is the cytoskeleton. The protein resides in the cilium axoneme. It localises to the flagellum axoneme. Functionally, functions as part of axonemal radial spoke complexes that play an important part in the motility of sperm and cilia. The protein is Radial spoke head 1 homolog (Rsph1) of Mus musculus (Mouse).